A 180-amino-acid chain; its full sequence is Insulin-like growth factor 2 (180 aa).

A signal peptide spans Met-1–Ala-24. The tract at residues Ala-25–Phe-52 is b. 3 disulfide bridges follow: Cys-33/Cys-71, Cys-45/Cys-84, and Cys-70/Cys-75. Positions Ser-53–Arg-64 are c. Residues Gly-65–Ala-85 form an a region. The interval Thr-86 to Glu-91 is d. The propeptide at Arg-92–Lys-180 is e peptide. O-linked (GalNAc...) threonine glycosylation is found at Thr-96, Thr-99, and Thr-163. The segment at Leu-161–Lys-180 is disordered.

The protein belongs to the insulin family. In terms of assembly, interacts with MYORG; this interaction is required for IGF2 secretion. Interacts with integrins ITGAV:ITGB3 and ITGA6:ITGB4; integrin-binding is required for IGF2 signaling. Interacts with IGFBP2. Post-translationally, O-glycosylated with core 1 or possibly core 8 glycans. Thr-96 is a minor glycosylation site compared to Thr-99. Proteolytically processed by PCSK4, proIGF2 is cleaved at Arg-128 and Arg-92 to generate big-IGF2 and mature IGF2. In terms of tissue distribution, expressed in heart, placenta, lung, liver, muscle, kidney, tongue, limb, eye and pancreas.

It is found in the secreted. Its function is as follows. The insulin-like growth factors possess growth-promoting activity. Major fetal growth hormone in mammals. Plays a key role in regulating fetoplacental development. IGF2 is influenced by placental lactogen. Also involved in tissue differentiation. In adults, involved in glucose metabolism in adipose tissue, skeletal muscle and liver. Acts as a ligand for integrin which is required for IGF2 signaling. Positively regulates myogenic transcription factor MYOD1 function by facilitating the recruitment of transcriptional coactivators, thereby controlling muscle terminal differentiation. Inhibits myoblast differentiation and modulates metabolism via increasing the mitochondrial respiration rate. In terms of biological role, preptin undergoes glucose-mediated co-secretion with insulin, and acts as a physiological amplifier of glucose-mediated insulin secretion. Exhibits osteogenic properties by increasing osteoblast mitogenic activity through phosphoactivation of MAPK1 and MAPK3. This chain is Insulin-like growth factor 2, found in Homo sapiens (Human).